Reading from the N-terminus, the 2144-residue chain is Alpha-protein kinase 2 (2144 aa).

Positions 7–105 constitute an Ig-like 1 domain; that stretch reads PERRTLCFLS…ICCSASLEVQ (99 aa). Cys33 and Cys98 are joined by a disulfide. Disordered regions lie at residues 425–473, 500–575, 727–775, 845–864, 881–907, 1011–1065, 1316–1340, 1471–1509, 1565–1587, 1629–1696, and 1720–1754; these read ETAK…LQTM, SLAR…GAPG, EDNE…NVGS, QTQG…DGKS, EASE…TLPY, SCEA…PEGQ, DPVE…EMEM, GPGE…ETEV, CGNH…PKGN, ECES…GSGH, and ENSR…PCKA. The segment covering 500–511 has biased composition (basic and acidic residues); that stretch reads SLARERTDEKYP. A compositionally biased stretch (basic and acidic residues) spans 853 to 864; that stretch reads RSTDKRSQDGKS. Residues 897 to 906 are compositionally biased toward polar residues; the sequence is PPSTFSSTLP. Polar residues predominate over residues 1574-1587; sequence DLTNTPCTSSPKGN. Composition is skewed to basic and acidic residues over residues 1631–1645 and 1732–1754; these read ESEK…RDPC and PKFE…PCKA. The Ig-like 2 domain maps to 1759-1847; that stretch reads PVLLKRIQAE…GKVTAEFNLT (89 aa). Cysteines 1781 and 1831 form a disulfide. One can recognise an Alpha-type protein kinase domain in the interval 1874 to 2106; that stretch reads KEDVFNDSYF…YCKMLGLKSL (233 aa). The disordered stretch occupies residues 2109–2144; that stretch reads NSQKPKKPIVGKGRVPTNATQVKTPESETPPAERKT.

Belongs to the protein kinase superfamily. Alpha-type protein kinase family. ALPK subfamily.

The protein localises to the basolateral cell membrane. It carries out the reaction L-seryl-[protein] + ATP = O-phospho-L-seryl-[protein] + ADP + H(+). It catalyses the reaction L-threonyl-[protein] + ATP = O-phospho-L-threonyl-[protein] + ADP + H(+). In terms of biological role, protein kinase that recognizes phosphorylation sites in which the surrounding peptides have an alpha-helical conformation. Regulates cardiac development and cardiomyocyte differentiation by negatively regulating Wnt/beta-catenin signaling. In Mus musculus (Mouse), this protein is Alpha-protein kinase 2.